We begin with the raw amino-acid sequence, 853 residues long: Aryl hydrocarbon receptor (853 aa).

The propeptide occupies 1 to 9; sequence MSSGANITY. The disordered stretch occupies residues 1-38; that stretch reads MSSGANITYASRKRRKPVQKTVKPVPAEGIKSNPSKRH. Short sequence motifs (nuclear localization signal) lie at residues 12-15 and 36-41; these read RKRR and KRHRDR. Residues 26-79 form the bHLH domain; it reads PAEGIKSNPSKRHRDRLNTELDRLASLLPFPQDVINKLDKLSVLRLSVSYLRAK. The interval 37–65 is DNA-binding; the sequence is RHRDRLNTELDRLASLLPFPQDVINKLDK. 3 required for maintaining the overall integrity of the AHR:ARNT heterodimer and its transcriptional activity regions span residues 49–81, 116–124, and 264–266; these read LASL…AKSF, LLQALNGFV, and FAI. Positions 63-71 match the Nuclear export signal motif; the sequence is LDKLSVLRL. The PAS 1 domain maps to 116–179; it reads LLQALNGFVL…RQLHWALNPS (64 aa). A PAS 2 domain is found at 273–340; that stretch reads PSILEIRTKN…CAESHIRMIK (68 aa). The PAC domain maps to 346–384; it reads MTVFRLLAKHSRWRWVQSNARLIYRNGRPDYIIATQRPL. Residues 429–451 form a disordered region; sequence TKSNTSRKDWAPQSTPSKDSFHP. Over residues 440–451 the composition is skewed to polar residues; the sequence is PQSTPSKDSFHP.

As to quaternary structure, homodimer. Heterodimer; efficient DNA binding requires dimerization with another bHLH protein. Interacts with ARNT; the heterodimer ARNT:AHR binds to core DNA sequence 5'-TGCGTG-3' within the dioxin response element (DRE) of target gene promoters and activates their transcription. Binds MYBBP1A. Interacts with coactivators including SRC-1, RIP140 and NOCA7, and with the corepressor SMRT. Interacts with NEDD8 and IVNS1ABP. Interacts with BMAL1. Interacts with HSP90AB1. Interacts with TIPARP; leading to mono-ADP-ribosylation of AHR and subsequent inhibition of AHR. Mono-ADP-ribosylated, leading to inhibit transcription activator activity of AHR. As to expression, expressed in all tissues tested including brain, heart, kidney, liver, lung, spleen, skeletal muscle and thymus.

The protein resides in the cytoplasm. It is found in the nucleus. Ligand-activated transcription factor that enables cells to adapt to changing conditions by sensing compounds from the environment, diet, microbiome and cellular metabolism, and which plays important roles in development, immunity and cancer. Upon ligand binding, translocates into the nucleus, where it heterodimerizes with ARNT and induces transcription by binding to xenobiotic response elements (XRE). Regulates a variety of biological processes, including angiogenesis, hematopoiesis, drug and lipid metabolism, cell motility and immune modulation. Xenobiotics can act as ligands: upon xenobiotic-binding, activates the expression of multiple phase I and II xenobiotic chemical metabolizing enzyme genes (such as the CYP1A1 gene). Mediates biochemical and toxic effects of halogenated aromatic hydrocarbons. Next to xenobiotics, natural ligands derived from plants, microbiota, and endogenous metabolism are potent AHR agonists. Tryptophan (Trp) derivatives constitute an important class of endogenous AHR ligands. Acts as a negative regulator of anti-tumor immunity: indoles and kynurenic acid generated by Trp catabolism act as ligand and activate AHR, thereby promoting AHR-driven cancer cell motility and suppressing adaptive immunity. Regulates the circadian clock by inhibiting the basal and circadian expression of the core circadian component PER1. Inhibits PER1 by repressing the CLOCK-BMAL1 heterodimer mediated transcriptional activation of PER1. The heterodimer ARNT:AHR binds to core DNA sequence 5'-TGCGTG-3' within the dioxin response element (DRE) of target gene promoters and activates their transcription. The polypeptide is Aryl hydrocarbon receptor (Ahr) (Rattus norvegicus (Rat)).